Reading from the N-terminus, the 274-residue chain is 2,3,4,5-tetrahydropyridine-2,6-dicarboxylate N-succinyltransferase (274 aa).

2 residues coordinate substrate: Arg-106 and Asp-143.

The protein belongs to the transferase hexapeptide repeat family. Homotrimer.

The protein localises to the cytoplasm. The catalysed reaction is (S)-2,3,4,5-tetrahydrodipicolinate + succinyl-CoA + H2O = (S)-2-succinylamino-6-oxoheptanedioate + CoA. The protein operates within amino-acid biosynthesis; L-lysine biosynthesis via DAP pathway; LL-2,6-diaminopimelate from (S)-tetrahydrodipicolinate (succinylase route): step 1/3. The chain is 2,3,4,5-tetrahydropyridine-2,6-dicarboxylate N-succinyltransferase from Rickettsia typhi (strain ATCC VR-144 / Wilmington).